Reading from the N-terminus, the 188-residue chain is ATP synthase subunit b (188 aa).

Residues 5–25 (MLLIFMMIVMIASSAMAAEAE) traverse the membrane as a helical segment.

The protein belongs to the ATPase B chain family. F-type ATPases have 2 components, F(1) - the catalytic core - and F(0) - the membrane proton channel. F(1) has five subunits: alpha(3), beta(3), gamma(1), delta(1), epsilon(1). F(0) has three main subunits: a(1), b(2) and c(10-14). The alpha and beta chains form an alternating ring which encloses part of the gamma chain. F(1) is attached to F(0) by a central stalk formed by the gamma and epsilon chains, while a peripheral stalk is formed by the delta and b chains.

Its subcellular location is the cell inner membrane. Its function is as follows. F(1)F(0) ATP synthase produces ATP from ADP in the presence of a proton or sodium gradient. F-type ATPases consist of two structural domains, F(1) containing the extramembraneous catalytic core and F(0) containing the membrane proton channel, linked together by a central stalk and a peripheral stalk. During catalysis, ATP synthesis in the catalytic domain of F(1) is coupled via a rotary mechanism of the central stalk subunits to proton translocation. Functionally, component of the F(0) channel, it forms part of the peripheral stalk, linking F(1) to F(0). The sequence is that of ATP synthase subunit b from Thermodesulfovibrio yellowstonii (strain ATCC 51303 / DSM 11347 / YP87).